Here is a 129-residue protein sequence, read N- to C-terminus: Glycine cleavage system H protein (129 aa).

The region spanning serine 24 to methionine 106 is the Lipoyl-binding domain. Position 65 is an N6-lipoyllysine (lysine 65).

Belongs to the GcvH family. As to quaternary structure, the glycine cleavage system is composed of four proteins: P, T, L and H. Requires (R)-lipoate as cofactor.

Its function is as follows. The glycine cleavage system catalyzes the degradation of glycine. The H protein shuttles the methylamine group of glycine from the P protein to the T protein. This is Glycine cleavage system H protein from Shewanella putrefaciens (strain CN-32 / ATCC BAA-453).